Here is a 539-residue protein sequence, read N- to C-terminus: Chaperonin GroEL (539 aa).

ATP contacts are provided by residues 29 to 32 (TIGP), 86 to 90 (DGTTT), G413, 476 to 478 (NAA), and D492.

It belongs to the chaperonin (HSP60) family. Forms a cylinder of 14 subunits composed of two heptameric rings stacked back-to-back. Interacts with the co-chaperonin GroES.

The protein resides in the cytoplasm. The catalysed reaction is ATP + H2O + a folded polypeptide = ADP + phosphate + an unfolded polypeptide.. In terms of biological role, together with its co-chaperonin GroES, plays an essential role in assisting protein folding. The GroEL-GroES system forms a nano-cage that allows encapsulation of the non-native substrate proteins and provides a physical environment optimized to promote and accelerate protein folding. The protein is Chaperonin GroEL of Staphylococcus epidermidis (strain ATCC 12228 / FDA PCI 1200).